Consider the following 525-residue polypeptide: Mannuronan C5-epimerase AlgG (525 aa).

The N-terminal stretch at 1 to 29 (MNVQRKLASTQLKPVLLGVLLATSAWSQA) is a signal peptide. 5 PbH1 repeats span residues 287 to 309 (ADDV…DPHD), 311 to 334 (SERL…IVSR), 336 to 358 (VNNS…VLDR), 360 to 382 (SEHN…TLYE), and 383 to 405 (SSNN…RMRN). Histidine 308 acts as the Proton acceptor in catalysis.

It belongs to the D-mannuronate C5-epimerase family.

It is found in the periplasm. The catalysed reaction is [(1-&gt;4)-beta-D-mannuronosyl](n) = [alginate](n). It participates in glycan biosynthesis; alginate biosynthesis. Inhibited by zinc. Its function is as follows. Catalyzes the epimerization of beta-D-mannuronate to alpha-L-guluronate during the synthesis of the linear polysaccharide alginate. In addition, is part of a periplasmic protein complex that protects alginate from degradation by AlgL by channeling the newly formed alginate polymer through a scaffold that transfers the alginate polymer through the periplasmic space to the outer membrane secretin AlgE. This is Mannuronan C5-epimerase AlgG from Azotobacter vinelandii.